We begin with the raw amino-acid sequence, 260 residues long: Phosphatidate cytidylyltransferase (260 aa).

Helical transmembrane passes span 9-29, 46-66, 70-90, 102-122, 130-150, 172-192, and 196-216; these read IIAL…LMLF, MIKL…IIML, AGDW…FILL, FMDA…FMYF, LHYI…AYIF, FIGG…FVDF, and IWLL…GDLV.

The protein belongs to the CDS family.

It is found in the cell membrane. The catalysed reaction is a 1,2-diacyl-sn-glycero-3-phosphate + CTP + H(+) = a CDP-1,2-diacyl-sn-glycerol + diphosphate. The protein operates within phospholipid metabolism; CDP-diacylglycerol biosynthesis; CDP-diacylglycerol from sn-glycerol 3-phosphate: step 3/3. This is Phosphatidate cytidylyltransferase (cdsA) from Staphylococcus haemolyticus (strain JCSC1435).